Here is a 137-residue protein sequence, read N- to C-terminus: Phosphoribosyl-ATP pyrophosphatase (137 aa).

A compositionally biased stretch (basic and acidic residues) spans 114–124 (EGTSGIEEKAL). Residues 114 to 137 (EGTSGIEEKALRKSLQRAAEEAQP) form a disordered region.

This sequence belongs to the PRA-PH family.

The protein resides in the cytoplasm. It carries out the reaction 1-(5-phospho-beta-D-ribosyl)-ATP + H2O = 1-(5-phospho-beta-D-ribosyl)-5'-AMP + diphosphate + H(+). The protein operates within amino-acid biosynthesis; L-histidine biosynthesis; L-histidine from 5-phospho-alpha-D-ribose 1-diphosphate: step 2/9. This is Phosphoribosyl-ATP pyrophosphatase from Paracidovorax citrulli (strain AAC00-1) (Acidovorax citrulli).